A 180-amino-acid chain; its full sequence is Thebaine synthase 1 (180 aa).

Ser96 is a thebaine binding site. Catalysis depends on His111, which acts as the Proton acceptor. Thr127 contacts thebaine.

The protein belongs to the MLP family. Homodimer (allosteric) and oligomers. As to expression, expressed in poppy latex.

It carries out the reaction (7S)-O-acetylsalutaridinol = thebaine + acetate + H(+). It participates in alkaloid biosynthesis; morphine biosynthesis. Catalyzes the formation of thebaine from (7S)-salutaridinol 7-O-acetate at the expense of labile hydroxylated by-products, which are preferentially produced by spontaneous allylic elimination. The protein is Thebaine synthase 1 of Papaver somniferum (Opium poppy).